Consider the following 331-residue polypeptide: tRNA(Ile)-lysidine synthase (331 aa).

An ATP-binding site is contributed by 29 to 34; sequence SGGPDS.

The protein belongs to the tRNA(Ile)-lysidine synthase family.

It is found in the cytoplasm. The catalysed reaction is cytidine(34) in tRNA(Ile2) + L-lysine + ATP = lysidine(34) in tRNA(Ile2) + AMP + diphosphate + H(+). Its function is as follows. Ligates lysine onto the cytidine present at position 34 of the AUA codon-specific tRNA(Ile) that contains the anticodon CAU, in an ATP-dependent manner. Cytidine is converted to lysidine, thus changing the amino acid specificity of the tRNA from methionine to isoleucine. The chain is tRNA(Ile)-lysidine synthase from Chlorobaculum tepidum (strain ATCC 49652 / DSM 12025 / NBRC 103806 / TLS) (Chlorobium tepidum).